The following is a 271-amino-acid chain: Tryptophan synthase alpha chain (271 aa).

Active-site proton acceptor residues include Glu-53 and Asp-64.

This sequence belongs to the TrpA family. In terms of assembly, tetramer of two alpha and two beta chains.

It carries out the reaction (1S,2R)-1-C-(indol-3-yl)glycerol 3-phosphate + L-serine = D-glyceraldehyde 3-phosphate + L-tryptophan + H2O. It participates in amino-acid biosynthesis; L-tryptophan biosynthesis; L-tryptophan from chorismate: step 5/5. Functionally, the alpha subunit is responsible for the aldol cleavage of indoleglycerol phosphate to indole and glyceraldehyde 3-phosphate. This Streptomyces coelicolor (strain ATCC BAA-471 / A3(2) / M145) protein is Tryptophan synthase alpha chain.